A 141-amino-acid chain; its full sequence is Lutropin subunit beta (141 aa).

Residues 1–20 (MEMLQGLLLWLLLSVAGVWA) form the signal peptide. The residue at position 21 (serine 21) is a Blocked amino end (Ser). 6 cysteine pairs are disulfide-bonded: cysteine 29-cysteine 77, cysteine 43-cysteine 92, cysteine 46-cysteine 130, cysteine 54-cysteine 108, cysteine 58-cysteine 110, and cysteine 113-cysteine 120. Asparagine 33 carries an N-linked (GlcNAc...) asparagine glycan.

This sequence belongs to the glycoprotein hormones subunit beta family. Heterodimer of a common alpha chain and a unique beta chain which confers biological specificity to thyrotropin, lutropin, follitropin and gonadotropin.

The protein resides in the secreted. Its function is as follows. Promotes spermatogenesis and ovulation by stimulating the testes and ovaries to synthesize steroids. The sequence is that of Lutropin subunit beta (LHB) from Sus scrofa (Pig).